The chain runs to 1019 residues: UPF0182 protein Krad_1193 (1019 aa).

7 helical membrane-spanning segments follow: residues 19-39 (GAAL…VVGA), 61-81 (LWLQ…AVAV), 115-135 (RLVV…VAMS), 169-189 (WLAF…IAGL), 213-233 (VHLA…YWLD), 264-284 (AILA…AVGT), and 291-311 (IGTG…PWAV). Disordered regions lie at residues 897–934 (GNSG…ATGD) and 977–1019 (DAAS…TPTP). The span at 977–1005 (DAASAAEARLERSGTSGPTSSSSPSASSA) shows a compositional bias: low complexity. A compositionally biased stretch (pro residues) spans 1006–1019 (PPVPGETPAATPTP).

It belongs to the UPF0182 family.

The protein localises to the cell membrane. This is UPF0182 protein Krad_1193 from Kineococcus radiotolerans (strain ATCC BAA-149 / DSM 14245 / SRS30216).